A 167-amino-acid chain; its full sequence is UPF0179 protein Pars_2336 (167 aa).

The protein belongs to the UPF0179 family.

The chain is UPF0179 protein Pars_2336 from Pyrobaculum arsenaticum (strain DSM 13514 / JCM 11321 / PZ6).